The chain runs to 369 residues: tRNA pseudouridine synthase D (369 aa).

The active-site Nucleophile is the D80. Residues 156-318 (GIPNWFGEQR…LKQERRALRL (163 aa)) form the TRUD domain.

This sequence belongs to the pseudouridine synthase TruD family.

The enzyme catalyses uridine(13) in tRNA = pseudouridine(13) in tRNA. Responsible for synthesis of pseudouridine from uracil-13 in transfer RNAs. The protein is tRNA pseudouridine synthase D of Xanthomonas euvesicatoria pv. vesicatoria (strain 85-10) (Xanthomonas campestris pv. vesicatoria).